The sequence spans 577 residues: (E)-beta-farnesene synthase (577 aa).

Mg(2+) is bound by residues aspartate 327, aspartate 331, aspartate 474, serine 478, and glutamate 482. A DDXXD motif motif is present at residues 327 to 331 (DDTFD).

Belongs to the terpene synthase family. The cofactor is Mg(2+). Requires Co(2+) as cofactor. It depends on Mn(2+) as a cofactor. In terms of tissue distribution, expressed in flowers.

It localises to the cytoplasm. It catalyses the reaction (2E,6E)-farnesyl diphosphate = (E)-beta-farnesene + diphosphate. The protein operates within secondary metabolite biosynthesis; terpenoid biosynthesis. With respect to regulation, strongly inhibited by manganese at concentration higher than 20 uM. Its function is as follows. Sesquiterpene cyclase catalyzing the production of beta-farnesene from farnesyl diphosphate. Unable to use geranyl diphosphate as substrate. This chain is (E)-beta-farnesene synthase (CASC125), found in Artemisia annua (Sweet wormwood).